Here is a 204-residue protein sequence, read N- to C-terminus: Recombination protein RecR (204 aa).

Residues 58–75 form a C4-type zinc finger; sequence CSVCQNITDLGVDPCHIC. A Toprim domain is found at 83-181; that stretch reads SVICVVESPT…NVTRIARGIP (99 aa).

This sequence belongs to the RecR family.

Its function is as follows. May play a role in DNA repair. It seems to be involved in an RecBC-independent recombinational process of DNA repair. It may act with RecF and RecO. In Chlorobaculum tepidum (strain ATCC 49652 / DSM 12025 / NBRC 103806 / TLS) (Chlorobium tepidum), this protein is Recombination protein RecR.